The primary structure comprises 103 residues: Pyrimidine/purine nucleoside phosphorylase (103 aa).

It belongs to the nucleoside phosphorylase PpnP family.

It carries out the reaction a purine D-ribonucleoside + phosphate = a purine nucleobase + alpha-D-ribose 1-phosphate. The catalysed reaction is adenosine + phosphate = alpha-D-ribose 1-phosphate + adenine. The enzyme catalyses cytidine + phosphate = cytosine + alpha-D-ribose 1-phosphate. It catalyses the reaction guanosine + phosphate = alpha-D-ribose 1-phosphate + guanine. It carries out the reaction inosine + phosphate = alpha-D-ribose 1-phosphate + hypoxanthine. The catalysed reaction is thymidine + phosphate = 2-deoxy-alpha-D-ribose 1-phosphate + thymine. The enzyme catalyses uridine + phosphate = alpha-D-ribose 1-phosphate + uracil. It catalyses the reaction xanthosine + phosphate = alpha-D-ribose 1-phosphate + xanthine. Functionally, catalyzes the phosphorolysis of diverse nucleosides, yielding D-ribose 1-phosphate and the respective free bases. Can use uridine, adenosine, guanosine, cytidine, thymidine, inosine and xanthosine as substrates. Also catalyzes the reverse reactions. The polypeptide is Pyrimidine/purine nucleoside phosphorylase (Shewanella putrefaciens (strain CN-32 / ATCC BAA-453)).